Here is a 421-residue protein sequence, read N- to C-terminus: ATP-dependent RNA helicase RhlB (421 aa).

The Q motif signature appears at 9 to 37 (QKFSDFALHPKVVEALEKKGFHNCTPIQA). The Helicase ATP-binding domain maps to 40 to 219 (LPLTLAGRDV…FEQMNNAEYI (180 aa)). Position 53–60 (53–60 (AQTGTGKT)) interacts with ATP. The DEAD box motif lies at 165–168 (DEAD). The Helicase C-terminal domain occupies 245–390 (RLLQTLIEEE…VSKYNPDALM (146 aa)). Positions 392 to 421 (DLPKPLRLTRPRTGNGPRRTGAPRNRRRSG) are disordered. A compositionally biased stretch (low complexity) spans 402-414 (PRTGNGPRRTGAP).

Belongs to the DEAD box helicase family. RhlB subfamily. As to quaternary structure, component of the RNA degradosome, which is a multiprotein complex involved in RNA processing and mRNA degradation.

The protein resides in the cytoplasm. It catalyses the reaction ATP + H2O = ADP + phosphate + H(+). Its function is as follows. DEAD-box RNA helicase involved in RNA degradation. Has RNA-dependent ATPase activity and unwinds double-stranded RNA. The sequence is that of ATP-dependent RNA helicase RhlB from Escherichia coli O157:H7.